The primary structure comprises 68 residues: Large ribosomal subunit protein bL35 (68 aa).

The protein belongs to the bacterial ribosomal protein bL35 family.

This Persephonella marina (strain DSM 14350 / EX-H1) protein is Large ribosomal subunit protein bL35.